Consider the following 215-residue polypeptide: Protein FAM167A (215 aa).

2 disordered regions span residues 1–26 (MSVP…PPDD) and 63–109 (RPAA…LTTG). Positions 124–157 (LRKELAEMRLQDQQLARQLMRLRGDINKLKIEQT) form a coiled coil.

Belongs to the FAM167 (SEC) family.

This chain is Protein FAM167A (Fam167a), found in Mus musculus (Mouse).